The chain runs to 58 residues: Large ribosomal subunit protein uL30 (58 aa).

The protein belongs to the universal ribosomal protein uL30 family. Part of the 50S ribosomal subunit.

This Desulfovibrio desulfuricans (strain ATCC 27774 / DSM 6949 / MB) protein is Large ribosomal subunit protein uL30.